A 678-amino-acid polypeptide reads, in one-letter code: ERAD-associated E3 ubiquitin-protein ligase component HRD3A (678 aa).

An N-terminal signal peptide occupies residues 1 to 25; it reads MRILSYGIVILSLLVFSFIEFGVHA. The segment at 40–71 is disordered; that stretch reads GGDDNGVGESSDFDEFGESEPKSEEELDPGSW. Sel1-like repeat units follow at residues 124 to 159, 242 to 277, 279 to 313, 317 to 349, 353 to 386, 388 to 422, 506 to 537, and 540 to 568; these read PHAQ…AGGN, ANAM…VDKG, PRSM…AKEG, AFNG…AVDN, SGHY…ANAG, PKAF…AERG, AALL…AKSQ, and AQAM…RYYD. N-linked (GlcNAc...) asparagine glycans are attached at residues asparagine 298 and asparagine 335. A helical membrane pass occupies residues 620–640; that stretch reads VVFEEGNATILTLFVCLITIL.

The protein belongs to the sel-1 family. In terms of assembly, interacts with OS9.

It localises to the endoplasmic reticulum membrane. Its function is as follows. Component of the endoplasmic reticulum (ER) quality control system called ER-associated degradation (ERAD) and involved in ubiquitin-dependent degradation of misfolded endoplasmic reticulum proteins. Functions as an ERAD substrate-recruiting factor that recognizes misfolded proteins for the HRD1 E3 ubiquitin ligase complex. Targets the misfolded LRR receptor kinase BRI1. In Arabidopsis thaliana (Mouse-ear cress), this protein is ERAD-associated E3 ubiquitin-protein ligase component HRD3A.